Here is a 423-residue protein sequence, read N- to C-terminus: G2/mitotic-specific cyclin-B1 (423 aa).

Position 116 is a phosphoserine; by CDK1 (Ser116). At Ser118 the chain carries Phosphoserine. Phosphoserine; by PLK1 is present on Ser123. Ser137 bears the Phosphoserine mark. Interaction with CDK2 regions lie at residues 159–167 and 248–251; these read EYVKDIYAY and YEEM. A Phosphothreonine modification is found at Thr311.

The protein belongs to the cyclin family. Cyclin AB subfamily. In terms of assembly, interacts with the CDC2 protein kinase to form a serine/threonine kinase holoenzyme complex also known as maturation promoting factor (MPF). The cyclin subunit imparts substrate specificity to the complex. Binds HEI10. Interacts with catalytically active RALBP1 and CDC2 during mitosis to form an endocytotic complex during interphase. Interacts with CCNF; interaction is required for nuclear localization. Interacts with CDK5RAP3. Interacts with RFPL4A and UBE2A. Interacts with INCA1. Ubiquitinated by the SCF(NIPA) complex during interphase, leading to its destruction. Deubiquitinated by USP22 during G2/M phase. Post-translationally, phosphorylated by PLK1 at Ser-123 on centrosomes during prophase: phosphorylation by PLK1 does not cause nuclear import. Phosphorylation at Ser-137 was also reported to be mediated by PLK1 but Ser-123 seems to be the primary phosphorylation site.

Its subcellular location is the cytoplasm. It is found in the nucleus. The protein resides in the cytoskeleton. The protein localises to the microtubule organizing center. It localises to the centrosome. Functionally, essential for the control of the cell cycle at the G2/M (mitosis) transition. This is G2/mitotic-specific cyclin-B1 (Ccnb1) from Rattus norvegicus (Rat).